The primary structure comprises 356 residues: MKPVFCGNFEYDARESDLERLFRKYGKVERVDMKAGFAFVYMEDERDAEDAIRALDRFEYGRTGRRLRVEWTKNDRGGAGRSGGSRRSSSGLRPSKTLFVINFDAQNTRTRDLERHFEPYGKIVNVRIRRNFAFIQYEAQEDATRALDATNSSKLMDKVISVEYAVKDDDSRGNGYSPERRRDRSPDRRRRSPSPYRRERGSPDYGRGASPVAHKRERTSPDYGRGRRSPSPYKRARLSPDYKRDDRRRERVASPENGAVRNRSPRKGRGESRSPPPYEKRRESRSPPPYEKRRESRSPPPYEKRRERSRSRSKSSPENGQVESPGQIMEVEAGRGYDGADSPIRESPSRSPPAEE.

RRM domains lie at 2 to 74 and 96 to 167; these read KPVF…WTKN and KTLF…YAVK. Positions 73–92 are disordered; the sequence is KNDRGGAGRSGGSRRSSSGL. Residues 168–186 show a composition bias toward basic and acidic residues; it reads DDDSRGNGYSPERRRDRSP. The disordered stretch occupies residues 168–356; the sequence is DDDSRGNGYS…SPSRSPPAEE (189 aa). 6 positions are modified to phosphoserine: serine 192, serine 194, serine 210, serine 239, serine 254, and serine 274. The span at 238–253 shows a compositional bias: basic and acidic residues; it reads LSPDYKRDDRRRERVA. Tandem repeats lie at residues 267 to 278, 279 to 290, and 291 to 302. The segment at 267 to 307 is 4 X 12 AA tandem repeats of [KE]-[GK]-R -[GR]-E-S-R-S-P-P-P-Y; sequence KGRGESRSPPPYEKRRESRSPPPYEKRRESRSPPPYEKRRE. A compositionally biased stretch (basic and acidic residues) spans 268–306; sequence GRGESRSPPPYEKRRESRSPPPYEKRRESRSPPPYEKRR. A 4; truncated repeat occupies 303 to 307; that stretch reads EKRRE. 5 positions are modified to phosphoserine: serine 309, serine 324, serine 342, serine 347, and serine 351.

This sequence belongs to the splicing factor SR family. RS subfamily. Component of the spliceosome. Interacts with RCF3 and CPL1. Interacts with DRB1/HYL1 and SE. As to expression, leaves, stem, roots and flowers.

It localises to the nucleus. Its subcellular location is the nucleus speckle. Functionally, required for constitutive and alternative pre-mRNA splicing. Involved in primary miRNA processing and pri-miRNA biogenesis. Binds both intronless and intron-containing pri-miRNAs. The chain is Serine/arginine-rich splicing factor RS41 (RS41) from Arabidopsis thaliana (Mouse-ear cress).